The sequence spans 414 residues: Serpin A12 (414 aa).

Positions 1 to 20 are cleaved as a signal peptide; the sequence is MNPTLGLAIFLAVLLTVKGL. N-linked (GlcNAc...) (complex) asparagine glycans are attached at residues asparagine 221 and asparagine 233. Asparagine 267 carries N-linked (GlcNAc...) (high mannose) asparagine glycosylation. Positions 364–382 are reactive center loop; the sequence is GTEGAAGTGAQTLPMETPL.

Belongs to the serpin family. In terms of assembly, forms a stable complex with KLK7. Glycosylation slightly decreases affinity for heparin, but otherwise has no significant effect on KLK7 inhibitory activity or thermal stability of the protein. As to expression, expressed in visceral adipose tissues.

Its subcellular location is the secreted. With respect to regulation, inhibition of KLK7 is enhanced by heparin. In terms of biological role, adipokine that modulates insulin action by specifically inhibiting its target protease KLK7 in white adipose tissues. The protein is Serpin A12 (SERPINA12) of Homo sapiens (Human).